Reading from the N-terminus, the 120-residue chain is GATA transcription factor 23 (120 aa).

Residues 22-76 form a GATA-type zinc finger; sequence KGTIRCCSECKTTKTPMWRGGPTGPKSLCNACGIRHRKQRRSELLGIHIIRSHKS.

This sequence belongs to the type IV zinc-finger family. Class B subfamily.

Its subcellular location is the nucleus. Transcriptional regulator that specifically binds 5'-GATA-3' or 5'-GAT-3' motifs within gene promoters. This is GATA transcription factor 23 (GATA23) from Arabidopsis thaliana (Mouse-ear cress).